A 641-amino-acid polypeptide reads, in one-letter code: Chaperone protein DnaK (641 aa).

T200 is subject to Phosphothreonine; by autocatalysis. Over residues 605–623 (AAEQGGSADAASGNAQASK) the composition is skewed to low complexity. The tract at residues 605 to 627 (AAEQGGSADAASGNAQASKAADD) is disordered.

The protein belongs to the heat shock protein 70 family.

Functionally, acts as a chaperone. This chain is Chaperone protein DnaK, found in Xanthomonas oryzae pv. oryzae (strain MAFF 311018).